We begin with the raw amino-acid sequence, 343 residues long: MNFVQQNREGDAILVSLRPDTLEDYIGQEEVKKKLYIAMKAAKLRNEPLDHILFSGPPGLGKTTLAFVIAKEMGKNIHITSGPVLERQGDIAAILSSIEEGDILFIDEIHRINKAVEEVFYSALEDYKVDIMIGKGPTARSIRIGLKPFTLVGATTRSGLLSSPLRNRFGMILELQFYTVKELMEIIKRACKIMNIEIEESAAQLIASRARGTPRIALRLLKRVRDVATIRKENKIISHLVEKTMDILEIDKLGLDEMDRKILRTLIEIYDGGPVGIEALAATLNLEIDTLKEIHEPYLLQQGLIIRTPRGRVATGIAYEHLGYPSKISGGLFDESLRKSDES.

The tract at residues 1–178 is large ATPase domain (RuvB-L); that stretch reads MNFVQQNREG…FGMILELQFY (178 aa). ATP is bound by residues L17, R18, G59, K62, T63, T64, 125–127, R168, Y178, and R215; that span reads EDY. T63 provides a ligand contact to Mg(2+). The small ATPAse domain (RuvB-S) stretch occupies residues 179–249; sequence TVKELMEIIK…LVEKTMDILE (71 aa). The head domain (RuvB-H) stretch occupies residues 252 to 343; sequence KLGLDEMDRK…DESLRKSDES (92 aa). 2 residues coordinate DNA: R307 and R312.

It belongs to the RuvB family. As to quaternary structure, homohexamer. Forms an RuvA(8)-RuvB(12)-Holliday junction (HJ) complex. HJ DNA is sandwiched between 2 RuvA tetramers; dsDNA enters through RuvA and exits via RuvB. An RuvB hexamer assembles on each DNA strand where it exits the tetramer. Each RuvB hexamer is contacted by two RuvA subunits (via domain III) on 2 adjacent RuvB subunits; this complex drives branch migration. In the full resolvosome a probable DNA-RuvA(4)-RuvB(12)-RuvC(2) complex forms which resolves the HJ.

The protein localises to the cytoplasm. The enzyme catalyses ATP + H2O = ADP + phosphate + H(+). In terms of biological role, the RuvA-RuvB-RuvC complex processes Holliday junction (HJ) DNA during genetic recombination and DNA repair, while the RuvA-RuvB complex plays an important role in the rescue of blocked DNA replication forks via replication fork reversal (RFR). RuvA specifically binds to HJ cruciform DNA, conferring on it an open structure. The RuvB hexamer acts as an ATP-dependent pump, pulling dsDNA into and through the RuvAB complex. RuvB forms 2 homohexamers on either side of HJ DNA bound by 1 or 2 RuvA tetramers; 4 subunits per hexamer contact DNA at a time. Coordinated motions by a converter formed by DNA-disengaged RuvB subunits stimulates ATP hydrolysis and nucleotide exchange. Immobilization of the converter enables RuvB to convert the ATP-contained energy into a lever motion, pulling 2 nucleotides of DNA out of the RuvA tetramer per ATP hydrolyzed, thus driving DNA branch migration. The RuvB motors rotate together with the DNA substrate, which together with the progressing nucleotide cycle form the mechanistic basis for DNA recombination by continuous HJ branch migration. Branch migration allows RuvC to scan DNA until it finds its consensus sequence, where it cleaves and resolves cruciform DNA. This is Holliday junction branch migration complex subunit RuvB from Pseudothermotoga lettingae (strain ATCC BAA-301 / DSM 14385 / NBRC 107922 / TMO) (Thermotoga lettingae).